An 807-amino-acid chain; its full sequence is Glucocorticoid receptor (807 aa).

3 disordered regions span residues 1 to 47 (MDQG…LPSP), 246 to 284 (TDVN…QHQQ), and 412 to 438 (FSVS…SKPS). The modulating stretch occupies residues 1–444 (MDQGGLKRNC…SKPSGPTHKI (444 aa)). Positions 257–282 (LQHHQHQQQQHRHLLQHQQHQLHHQH) are enriched in basic residues. The segment covering 412–421 (FSVSFSSSSP) has biased composition (low complexity). 2 NR C4-type zinc fingers span residues 445–465 (CLVC…CGSC) and 490–514 (CAGR…FRKC). Residues 445-519 (CLVCSDEASG…RFRKCLQAGM (75 aa)) constitute a DNA-binding region (nuclear receptor). The segment at 520–553 (NLEARKNKKLIKMKVHRPTGSAEPISNMPVPVIP) is hinge. Residues 554 to 788 (RMPQLVPTML…FPEMLAEIIT (235 aa)) enclose the NR LBD domain.

It belongs to the nuclear hormone receptor family. NR3 subfamily. In terms of assembly, heteromultimeric cytoplasmic complex with HSP90. Upon ligand binding the complex undergoes a conformation change and moves to the nucleus, where it dissociates. Binds to DNA as a homodimer, and as heterodimer with NR3C2. Interaction with numerous other transcription factors modulates transcription activation.

It localises to the cytoplasm. Its subcellular location is the nucleus. The protein localises to the mitochondrion. It is found in the cytoskeleton. The protein resides in the spindle. It localises to the microtubule organizing center. Its subcellular location is the centrosome. Receptor for glucocorticoids (GC). Has a dual mode of action: as a transcription factor that binds to glucocorticoid response elements (GRE), both for nuclear and mitochondrial DNA, and as a modulator of other transcription factors. Affects inflammatory responses, cellular proliferation and differentiation in target tissues. Involved in chromatin remodeling. Plays a role in rapid mRNA degradation by binding to the 5' UTR of target mRNAs and interacting with PNRC2 in a ligand-dependent manner which recruits the RNA helicase UPF1 and the mRNA-decapping enzyme DCP1A, leading to RNA decay. Could act as a coactivator for STAT5-dependent transcription upon growth hormone (GH) stimulation and could reveal an essential role of hepatic GR in the control of body growth. Mediates glucocorticoid-induced apoptosis. Promotes accurate chromosome segregation during mitosis. May act as a tumor suppressor. May play a negative role in adipogenesis through the regulation of lipolytic and antilipogenic gene expression. This is Glucocorticoid receptor (nr3c1) from Paralichthys olivaceus (Bastard halibut).